A 135-amino-acid chain; its full sequence is MGLTSQLIPVLVCLLVCTSHFVHGHKCDITLAEIIKTLNILTTRKNSCMELPVADVFAAPKNTTEKETFCRVGIELRRIYRSHTCLNKFLGGLDRNLNSLASKTCSVNEAKTSTSTLKDLLERLKTIMKEKYSKC.

The signal sequence occupies residues 1–24 (MGLTSQLIPVLVCLLVCTSHFVHG). Disulfide bonds link Cys-27–Cys-135, Cys-48–Cys-85, and Cys-70–Cys-105. Residue Asn-62 is glycosylated (N-linked (GlcNAc...) asparagine).

It belongs to the IL-4/IL-13 family.

It localises to the secreted. Participates in at least several B-cell activation processes as well as of other cell types. It is a costimulator of DNA-synthesis. It induces the expression of class II MHC molecules on resting B-cells. It enhances both secretion and cell surface expression of IgE and IgG1. It also regulates the expression of the low affinity Fc receptor for IgE (CD23) on both lymphocytes and monocytes. Positively regulates IL31RA expression in macrophages. Stimulates autophagy in dendritic cells by interfering with mTORC1 signaling and through the induction of RUFY4. This Bos taurus (Bovine) protein is Interleukin-4 (IL4).